Consider the following 272-residue polypeptide: uncharacterized protein (272 aa).

This is an uncharacterized protein from Saccharomyces cerevisiae (strain ATCC 204508 / S288c) (Baker's yeast).